The following is a 122-amino-acid chain: S-adenosylmethionine decarboxylase proenzyme (122 aa).

Serine 63 serves as the catalytic Schiff-base intermediate with substrate; via pyruvic acid. Position 63 is a pyruvic acid (Ser); by autocatalysis (serine 63). The active-site Proton acceptor; for processing activity is histidine 68. The Proton donor; for catalytic activity role is filled by cysteine 83.

The protein belongs to the prokaryotic AdoMetDC family. Type 1 subfamily. As to quaternary structure, heterotetramer of two alpha and two beta chains arranged as a dimer of alpha/beta heterodimers. Pyruvate serves as cofactor. In terms of processing, is synthesized initially as an inactive proenzyme. Formation of the active enzyme involves a self-maturation process in which the active site pyruvoyl group is generated from an internal serine residue via an autocatalytic post-translational modification. Two non-identical subunits are generated from the proenzyme in this reaction, and the pyruvate is formed at the N-terminus of the alpha chain, which is derived from the carboxyl end of the proenzyme. The post-translation cleavage follows an unusual pathway, termed non-hydrolytic serinolysis, in which the side chain hydroxyl group of the serine supplies its oxygen atom to form the C-terminus of the beta chain, while the remainder of the serine residue undergoes an oxidative deamination to produce ammonia and the pyruvoyl group blocking the N-terminus of the alpha chain.

It carries out the reaction S-adenosyl-L-methionine + H(+) = S-adenosyl 3-(methylsulfanyl)propylamine + CO2. Its pathway is amine and polyamine biosynthesis; S-adenosylmethioninamine biosynthesis; S-adenosylmethioninamine from S-adenosyl-L-methionine: step 1/1. Catalyzes the decarboxylation of S-adenosylmethionine to S-adenosylmethioninamine (dcAdoMet), the propylamine donor required for the synthesis of the polyamines spermine and spermidine from the diamine putrescine. The sequence is that of S-adenosylmethionine decarboxylase proenzyme from Methanococcus vannielii (strain ATCC 35089 / DSM 1224 / JCM 13029 / OCM 148 / SB).